The following is a 522-amino-acid chain: Glutamate--cysteine ligase, chloroplastic (522 aa).

The transit peptide at 1-45 (MALMSQAGSSHCIYSEKMKCISGHSSITSNMEMLKMKDICFGNIS) directs the protein to the chloroplast. A disulfide bridge connects residues Cys-186 and Cys-406.

The protein belongs to the carboxylate-amine ligase family. Glutamate--cysteine ligase type 2 subfamily. As to quaternary structure, homodimer or monomer when oxidized or reduced, respectively. In terms of processing, the Cys-186-Cys-406 disulfide bridge is known to modulate the enzyme activity according to the redox status. The oxidized form constitutes the active enzyme.

The protein localises to the plastid. It localises to the chloroplast. The enzyme catalyses L-cysteine + L-glutamate + ATP = gamma-L-glutamyl-L-cysteine + ADP + phosphate + H(+). It functions in the pathway sulfur metabolism; glutathione biosynthesis; glutathione from L-cysteine and L-glutamate: step 1/2. This chain is Glutamate--cysteine ligase, chloroplastic (GSH1), found in Nicotiana tabacum (Common tobacco).